The following is an 85-amino-acid chain: Putative regulatory protein Dtur_1444 (85 aa).

This sequence belongs to the RemA family.

The protein is Putative regulatory protein Dtur_1444 of Dictyoglomus turgidum (strain DSM 6724 / Z-1310).